We begin with the raw amino-acid sequence, 309 residues long: Methionyl-tRNA formyltransferase (309 aa).

Residue Ser-109 to Pro-112 participates in (6S)-5,6,7,8-tetrahydrofolate binding.

This sequence belongs to the Fmt family.

The catalysed reaction is L-methionyl-tRNA(fMet) + (6R)-10-formyltetrahydrofolate = N-formyl-L-methionyl-tRNA(fMet) + (6S)-5,6,7,8-tetrahydrofolate + H(+). Functionally, attaches a formyl group to the free amino group of methionyl-tRNA(fMet). The formyl group appears to play a dual role in the initiator identity of N-formylmethionyl-tRNA by promoting its recognition by IF2 and preventing the misappropriation of this tRNA by the elongation apparatus. The protein is Methionyl-tRNA formyltransferase of Clostridium botulinum (strain Alaska E43 / Type E3).